A 271-amino-acid chain; its full sequence is MSWRPPVHDAPGIERNWYEACFRAHAGSCGCGNFIAHINLLAGRYGFTGGPPPPGGPPPGTPQVRASRNSPAAPQQPPALPWHGDGGEGGAAGPPGAGGDAAADAHLGDEELADLLDAIEDDAQCSNRRSKTRARRTDGPPTPIDTLEEYKWRTRNKWDPAGCSTPLTGEGAILARELSNACTRNLSTMKAILHNQKDLESFLQQRQQRESSESPKKAHIQRKKGRKPLQKSRRRRRQYSSSSDDSESSGSSSSSSNSSPEKCSKRKRVST.

Disordered stretches follow at residues 49–103, 124–146, and 203–271; these read GGPP…DAAA, QCSNRRSKTRARRTDGPPTPIDT, and LQQR…RVST. Pro residues predominate over residues 50-61; the sequence is GPPPPGGPPPGT. A compositionally biased stretch (gly residues) spans 87–99; it reads GEGGAAGPPGAGG. Over residues 207–216 the composition is skewed to basic and acidic residues; it reads QQRESSESPK. Residues 217-238 show a composition bias toward basic residues; sequence KAHIQRKKGRKPLQKSRRRRRQ. Residues 239–259 show a composition bias toward low complexity; the sequence is YSSSSDDSESSGSSSSSSNSS.

In terms of processing, phosphorylated at C-terminal serines.

This chain is Probable protein VP2, found in Torque teno virus (isolate Human/Japan/SANBAN/1999) (TTV).